The following is a 182-amino-acid chain: Large ribosomal subunit protein uL16 (182 aa).

Residues 140 to 182 (EKPTQVGKAPPKSSFLPSDETETAAAQAGTEASSASSVTPLES) are disordered. Positions 162–176 (TAAAQAGTEASSASS) are enriched in low complexity.

The protein belongs to the universal ribosomal protein uL16 family. In terms of assembly, part of the 50S ribosomal subunit.

Its function is as follows. Binds 23S rRNA and is also seen to make contacts with the A and possibly P site tRNAs. This is Large ribosomal subunit protein uL16 from Prochlorococcus marinus (strain SARG / CCMP1375 / SS120).